We begin with the raw amino-acid sequence, 430 residues long: Probable transporter SCO4007 (430 aa).

Residues 1-17 show a composition bias toward low complexity; that stretch reads MPSSPSSTTPAPTSTPA. The segment at 1–26 is disordered; that stretch reads MPSSPSSTTPAPTSTPAARREPSGKG. The next 11 membrane-spanning stretches (helical) occupy residues 34–54, 70–90, 101–121, 126–146, 159–179, 188–208, 244–264, 275–295, 315–335, 362–382, and 383–403; these read LFLP…YLAA, AVAW…LFFA, LVAA…ASAG, AGAV…VPLV, VAAV…LGGL, AVFV…AYIL, AGMY…LTEG, GLFG…GGLV, VPLF…AVLV, TAYV…AGPA, and FGHW…VLGW.

It belongs to the major facilitator superfamily.

The protein resides in the cell membrane. In Streptomyces coelicolor (strain ATCC BAA-471 / A3(2) / M145), this protein is Probable transporter SCO4007.